Consider the following 710-residue polypeptide: Probable thimet oligopeptidase (710 aa).

His502 contributes to the Zn(2+) binding site. The active site involves Glu503. His506 is a Zn(2+) binding site.

Belongs to the peptidase M3 family. It depends on Zn(2+) as a cofactor.

It localises to the cytoplasm. The catalysed reaction is Preferential cleavage of bonds with hydrophobic residues at P1, P2 and P3' and a small residue at P1' in substrates of 5 to 15 residues.. Functionally, involved in cytoplasmic peptide degradation. The protein is Probable thimet oligopeptidase of Arabidopsis thaliana (Mouse-ear cress).